The following is a 461-amino-acid chain: Glycine--tRNA ligase (461 aa).

Residues Arg100 and Glu174 each coordinate substrate. ATP-binding positions include 206-208, 216-221, 290-291, and 334-337; these read RNE, FRTREF, EL, and GVDR. 221–225 contacts substrate; the sequence is FEQME. 330–334 contacts substrate; it reads EPSVG.

The protein belongs to the class-II aminoacyl-tRNA synthetase family. Homodimer.

Its subcellular location is the cytoplasm. The catalysed reaction is tRNA(Gly) + glycine + ATP = glycyl-tRNA(Gly) + AMP + diphosphate. Catalyzes the attachment of glycine to tRNA(Gly). The protein is Glycine--tRNA ligase of Caldanaerobacter subterraneus subsp. tengcongensis (strain DSM 15242 / JCM 11007 / NBRC 100824 / MB4) (Thermoanaerobacter tengcongensis).